The following is a 458-amino-acid chain: Phosphomethylpyrimidine synthase (458 aa).

Substrate is bound by residues asparagine 80, methionine 109, tyrosine 139, histidine 175, 195–197 (SRG), 236–239 (DSLR), and glutamate 275. Histidine 279 serves as a coordination point for Zn(2+). Substrate is bound at residue tyrosine 302. Position 343 (histidine 343) interacts with Zn(2+). Cysteine 423, cysteine 426, and cysteine 431 together coordinate [4Fe-4S] cluster.

It belongs to the ThiC family. [4Fe-4S] cluster is required as a cofactor.

It catalyses the reaction 5-amino-1-(5-phospho-beta-D-ribosyl)imidazole + S-adenosyl-L-methionine = 4-amino-2-methyl-5-(phosphooxymethyl)pyrimidine + CO + 5'-deoxyadenosine + formate + L-methionine + 3 H(+). It functions in the pathway cofactor biosynthesis; thiamine diphosphate biosynthesis. In terms of biological role, catalyzes the synthesis of the hydroxymethylpyrimidine phosphate (HMP-P) moiety of thiamine from aminoimidazole ribotide (AIR) in a radical S-adenosyl-L-methionine (SAM)-dependent reaction. The chain is Phosphomethylpyrimidine synthase from Acaryochloris marina (strain MBIC 11017).